The chain runs to 505 residues: MAAAAAFFCALLFISVQHGVLGGYTRNDFPADFVFGAATSAYQYEGAAAEDGRGASIWDTFTHAGKMKDKSTGDVASDGYHKYKGDVKLMTETGLEAYRFSISWSRLIPSGRGAVNQQGLKYYNNIIDELTKRGIQVHVMLYHLDLPQALEDEYAGWLSPRIVEDFTAYADVCFREFGDRVSHWTILAEPNVAALGGYDTGEFAPGRCSDPFGVTKCTVGNSSVEPYVAAHNMILTHAAVVRLYREKYQTLQKGIVGINVLSLWSYPLTDSTADLQAAQRYKDFTYGWILHPLVFGDYPQVMKKAIGSRLPSFSKVQTELVKGTLDFIGVNHYFSLYVSDLPLAKGVRDFIADRSVSCRGLLQGVRFIAQTMQAPTRSMGDPHGLQLMLQHLKESYGDLPIYVQENGKYRKASSNDSLDDTDRVDYIKGYIEGVLNATRNGVNARGYFAWFFVDMFELLSGYQTRYGLYRVDFDDAALPRRAKRSARWYRDFLKSKRQPLQIAQQ.

An N-terminal signal peptide occupies residues 1–22; it reads MAAAAAFFCALLFISVQHGVLG. A beta-D-glucoside contacts are provided by Gln43 and His143. Catalysis depends on Glu189, which acts as the Proton donor. Cys208 and Cys217 are disulfide-bonded. Asn221 carries an N-linked (GlcNAc...) asparagine glycan. Tyr333 and Glu405 together coordinate a beta-D-glucoside. Catalysis depends on Glu405, which acts as the Nucleophile. 2 N-linked (GlcNAc...) asparagine glycosylation sites follow: Asn415 and Asn436. Residues Trp450 and Tyr466 each contribute to the a beta-D-glucoside site.

It belongs to the glycosyl hydrolase 1 family.

It carries out the reaction Hydrolysis of terminal, non-reducing beta-D-glucosyl residues with release of beta-D-glucose.. This is Beta-glucosidase 3 (BGLU3) from Oryza sativa subsp. japonica (Rice).